Here is a 279-residue protein sequence, read N- to C-terminus: Thymidylate synthase (279 aa).

Arg133–Arg134 serves as a coordination point for dUMP. The Nucleophile role is filled by Cys154. DUMP-binding positions include Arg178–Asp181, Asn189, and His219–Tyr221. A (6R)-5,10-methylene-5,6,7,8-tetrahydrofolate-binding site is contributed by Asp181. Ala278 lines the (6R)-5,10-methylene-5,6,7,8-tetrahydrofolate pocket.

The protein belongs to the thymidylate synthase family. Bacterial-type ThyA subfamily. Homodimer.

It localises to the cytoplasm. The catalysed reaction is dUMP + (6R)-5,10-methylene-5,6,7,8-tetrahydrofolate = 7,8-dihydrofolate + dTMP. It functions in the pathway pyrimidine metabolism; dTTP biosynthesis. Functionally, catalyzes the reductive methylation of 2'-deoxyuridine-5'-monophosphate (dUMP) to 2'-deoxythymidine-5'-monophosphate (dTMP) while utilizing 5,10-methylenetetrahydrofolate (mTHF) as the methyl donor and reductant in the reaction, yielding dihydrofolate (DHF) as a by-product. This enzymatic reaction provides an intracellular de novo source of dTMP, an essential precursor for DNA biosynthesis. In Streptococcus pyogenes serotype M6 (strain ATCC BAA-946 / MGAS10394), this protein is Thymidylate synthase.